A 168-amino-acid polypeptide reads, in one-letter code: Gremlin-2 (168 aa).

Positions 1 to 21 (MFWKLSLTLLLVAVLVKVAET) are cleaved as a signal peptide. The N-linked (GlcNAc...) asparagine glycan is linked to Asn-40. 4 disulfide bridges follow: Cys-73-Cys-123, Cys-87-Cys-137, Cys-97-Cys-155, and Cys-101-Cys-157. The 91-residue stretch at 73–163 (CKTQPLRQTV…HCRCMSVNLS (91 aa)) folds into the CTCK domain. Asn-161 carries an N-linked (GlcNAc...) asparagine glycan.

Belongs to the DAN family. In terms of assembly, homodimer. Interacts with BMP2, BMP4 and BMP7, but has lower affinity for BMP7 than for BMP2 and BMP4. Binds heparin; this impairs the interaction with BMP2. Post-translationally, N-glycosylated. As to expression, highly expressed in the ovary, followed by brain, spleen, colon, kidney and uterus. In ovary expressed in granulosa cells of selective early antral follicles.

The protein localises to the secreted. Cytokine that inhibits the activity of BMP2 and BMP4 in a dose-dependent manner, and thereby modulates signaling by BMP family members. Contributes to the regulation of embryonic morphogenesis via BMP family members. Antagonizes BMP4-induced suppression of progesterone production in granulosa cells. The chain is Gremlin-2 (Grem2) from Mus musculus (Mouse).